Here is a 251-residue protein sequence, read N- to C-terminus: CDP-diacylglycerol pyrophosphatase (251 aa).

A helical membrane pass occupies residues 4 to 24 (AGLLFLVMIVIAVVAAGIGYW).

The protein belongs to the Cdh family.

Its subcellular location is the cell inner membrane. It catalyses the reaction a CDP-1,2-diacyl-sn-glycerol + H2O = a 1,2-diacyl-sn-glycero-3-phosphate + CMP + 2 H(+). The protein operates within phospholipid metabolism; CDP-diacylglycerol degradation; phosphatidate from CDP-diacylglycerol: step 1/1. The sequence is that of CDP-diacylglycerol pyrophosphatase from Escherichia coli O9:H4 (strain HS).